Consider the following 220-residue polypeptide: RNA polymerase sigma GP28 factor (220 aa).

Sigma factors are initiation factors that promote the attachment of RNA polymerase to specific initiation sites and are then released. This sigma factor is responsible for the expression of the phage middle genes. The sequence is that of RNA polymerase sigma GP28 factor (28) from Bacillus subtilis (Bacteriophage SP01).